The chain runs to 190 residues: Probable RNA-binding protein 18 (190 aa).

One can recognise an RRM domain in the interval His25–Ala106. A disordered region spans residues Val166 to Arg190.

This chain is Probable RNA-binding protein 18 (Rbm18), found in Mus musculus (Mouse).